We begin with the raw amino-acid sequence, 500 residues long: 7-alpha-hydroxycholest-4-en-3-one 12-alpha-hydroxylase (500 aa).

The chain crosses the membrane as a helical span at residues 4–24; it reads WCTVLGALLTVVGCLCLSLLL. S325 is subject to Phosphoserine. C439 contributes to the heme binding site.

The protein belongs to the cytochrome P450 family. Heme serves as cofactor. In terms of tissue distribution, expressed in liver.

The protein localises to the endoplasmic reticulum membrane. The protein resides in the microsome membrane. It catalyses the reaction 7alpha-hydroxycholest-4-en-3-one + reduced [NADPH--hemoprotein reductase] + O2 = 7alpha,12alpha-dihydroxycholest-4-en-3-one + oxidized [NADPH--hemoprotein reductase] + H2O + H(+). The catalysed reaction is 5beta-cholestane-3alpha,7alpha-diol + reduced [NADPH--hemoprotein reductase] + O2 = 5beta-cholestane-3alpha,7alpha,12alpha-triol + oxidized [NADPH--hemoprotein reductase] + H2O + H(+). It carries out the reaction chenodeoxycholate + reduced [NADPH--hemoprotein reductase] + O2 = cholate + oxidized [NADPH--hemoprotein reductase] + H2O + H(+). It functions in the pathway lipid metabolism; bile acid biosynthesis. Its function is as follows. A cytochrome P450 monooxygenase involved in primary bile acid biosynthesis. Catalyzes the 12alpha-hydroxylation of 7alpha-hydroxy-4-cholesten-3-one, an intermediate metabolite in cholic acid biosynthesis. Controls biliary balance of cholic acid and chenodeoxycholic acid, ultimately regulating the intestinal absorption of dietary lipids. Mechanistically, uses molecular oxygen inserting one oxygen atom into a substrate, and reducing the second into a water molecule, with two electrons provided by NADPH via cytochrome P450 reductase (CPR; NADPH--hemoprotein reductase). The sequence is that of 7-alpha-hydroxycholest-4-en-3-one 12-alpha-hydroxylase (Cyp8b1) from Mus musculus (Mouse).